Here is a 408-residue protein sequence, read N- to C-terminus: Phosphopentomutase (408 aa).

Mn(2+) is bound by residues D10, D307, H312, D348, H349, and H360.

The protein belongs to the phosphopentomutase family. Mn(2+) is required as a cofactor.

It is found in the cytoplasm. The enzyme catalyses 2-deoxy-alpha-D-ribose 1-phosphate = 2-deoxy-D-ribose 5-phosphate. It carries out the reaction alpha-D-ribose 1-phosphate = D-ribose 5-phosphate. Its pathway is carbohydrate degradation; 2-deoxy-D-ribose 1-phosphate degradation; D-glyceraldehyde 3-phosphate and acetaldehyde from 2-deoxy-alpha-D-ribose 1-phosphate: step 1/2. In terms of biological role, isomerase that catalyzes the conversion of deoxy-ribose 1-phosphate (dRib-1-P) and ribose 1-phosphate (Rib-1-P) to deoxy-ribose 5-phosphate (dRib-5-P) and ribose 5-phosphate (Rib-5-P), respectively. This Proteus mirabilis (strain HI4320) protein is Phosphopentomutase.